A 476-amino-acid polypeptide reads, in one-letter code: Bifunctional protein GlmU (476 aa).

The tract at residues 1–235 is pyrophosphorylase; the sequence is MTALDIIIMA…ALQVAGVNSP (235 aa). UDP-N-acetyl-alpha-D-glucosamine contacts are provided by residues K23, Q81, 86 to 87, 108 to 110, G145, E160, and N233; these read GT and SGD. D110 is a Mg(2+) binding site. N233 is a binding site for Mg(2+). The interval 236-256 is linker; it reads AQLAELERAHQRAQAAALMEQ. The segment at 257–476 is N-acetyltransferase; the sequence is GVRLADPARF…WKRPAKQAKG (220 aa). UDP-N-acetyl-alpha-D-glucosamine is bound by residues R351 and K369. H381 functions as the Proton acceptor in the catalytic mechanism. Positions 384 and 395 each coordinate UDP-N-acetyl-alpha-D-glucosamine. Acetyl-CoA is bound by residues A398, 404 to 405, S423, G441, and R458; that span reads NY.

The protein in the N-terminal section; belongs to the N-acetylglucosamine-1-phosphate uridyltransferase family. It in the C-terminal section; belongs to the transferase hexapeptide repeat family. In terms of assembly, homotrimer. Requires Mg(2+) as cofactor.

The protein resides in the cytoplasm. It carries out the reaction alpha-D-glucosamine 1-phosphate + acetyl-CoA = N-acetyl-alpha-D-glucosamine 1-phosphate + CoA + H(+). The catalysed reaction is N-acetyl-alpha-D-glucosamine 1-phosphate + UTP + H(+) = UDP-N-acetyl-alpha-D-glucosamine + diphosphate. The protein operates within nucleotide-sugar biosynthesis; UDP-N-acetyl-alpha-D-glucosamine biosynthesis; N-acetyl-alpha-D-glucosamine 1-phosphate from alpha-D-glucosamine 6-phosphate (route II): step 2/2. It functions in the pathway nucleotide-sugar biosynthesis; UDP-N-acetyl-alpha-D-glucosamine biosynthesis; UDP-N-acetyl-alpha-D-glucosamine from N-acetyl-alpha-D-glucosamine 1-phosphate: step 1/1. Its pathway is bacterial outer membrane biogenesis; LPS lipid A biosynthesis. Catalyzes the last two sequential reactions in the de novo biosynthetic pathway for UDP-N-acetylglucosamine (UDP-GlcNAc). The C-terminal domain catalyzes the transfer of acetyl group from acetyl coenzyme A to glucosamine-1-phosphate (GlcN-1-P) to produce N-acetylglucosamine-1-phosphate (GlcNAc-1-P), which is converted into UDP-GlcNAc by the transfer of uridine 5-monophosphate (from uridine 5-triphosphate), a reaction catalyzed by the N-terminal domain. This chain is Bifunctional protein GlmU, found in Acidovorax ebreus (strain TPSY) (Diaphorobacter sp. (strain TPSY)).